The primary structure comprises 442 residues: tRNA-2-methylthio-N(6)-dimethylallyladenosine synthase (442 aa).

An MTTase N-terminal domain is found at 6-122; it reads RKFYIHTFGC…LPVLIAEAGK (117 aa). Cys15, Cys51, Cys85, Cys157, Cys161, and Cys164 together coordinate [4Fe-4S] cluster. Residues 143–373 form the Radical SAM core domain; the sequence is RTQSLTAFVP…IDLQNGISAE (231 aa). The region spanning 376–439 is the TRAM domain; the sequence is RLAIGSVVEV…SATLIGRAAE (64 aa).

This sequence belongs to the methylthiotransferase family. MiaB subfamily. As to quaternary structure, monomer. It depends on [4Fe-4S] cluster as a cofactor.

It is found in the cytoplasm. It carries out the reaction N(6)-dimethylallyladenosine(37) in tRNA + (sulfur carrier)-SH + AH2 + 2 S-adenosyl-L-methionine = 2-methylsulfanyl-N(6)-dimethylallyladenosine(37) in tRNA + (sulfur carrier)-H + 5'-deoxyadenosine + L-methionine + A + S-adenosyl-L-homocysteine + 2 H(+). In terms of biological role, catalyzes the methylthiolation of N6-(dimethylallyl)adenosine (i(6)A), leading to the formation of 2-methylthio-N6-(dimethylallyl)adenosine (ms(2)i(6)A) at position 37 in tRNAs that read codons beginning with uridine. This chain is tRNA-2-methylthio-N(6)-dimethylallyladenosine synthase, found in Chlorobium limicola (strain DSM 245 / NBRC 103803 / 6330).